The chain runs to 156 residues: SCP2 sterol-binding domain-containing protein 1 (156 aa).

Positions 44 to 156 (NFSVFEDISQ…ERIFREWAKI (113 aa)) constitute an SCP2 domain.

The chain is SCP2 sterol-binding domain-containing protein 1 (Scp2d1) from Mus musculus (Mouse).